Here is a 154-residue protein sequence, read N- to C-terminus: Ribonuclease HI (154 aa).

In terms of domain architecture, RNase H type-1 spans 1-142; the sequence is MTKHVEIFTD…CDELARTAAE (142 aa). Aspartate 10, glutamate 48, aspartate 70, and aspartate 134 together coordinate Mg(2+).

The protein belongs to the RNase H family. As to quaternary structure, monomer. Mg(2+) serves as cofactor.

It localises to the cytoplasm. The enzyme catalyses Endonucleolytic cleavage to 5'-phosphomonoester.. In terms of biological role, endonuclease that specifically degrades the RNA of RNA-DNA hybrids. This is Ribonuclease HI from Vibrio parahaemolyticus serotype O3:K6 (strain RIMD 2210633).